Reading from the N-terminus, the 461-residue chain is MSPLQWLTISFALIIFHSLTVSSSVLSHSDRVTRLPGQPRVGFQQYSGYVTVDDKKQRALFYYFAEAETNPSSKPLVLWLNGGPGCSSLGVGAFSENGPFRPKGPILVKNQHSWNQEANMLYLETPVGVGFSYSTQSSHYEGVNDKITARDNLVFLQRWFLKFPHYLNRSLFITGESYAGHYVPQLAELMIQYNKKHHLFNLRGIAIGNPVLEFATDFNSRAEYFWSHGLISDSTYKMFTSYCNYSRYVSEYYRGSMSSMCSKVMSQVSTETSRFVDKYDVTLDVCIPSVLSQSKVVSPNQVGESVDVCVEDETVNYLNRRDVQEALHARLIGVREWTVCSNVLDYQLLDVEIPTINIVGSLVKAGVPVLVYSGDQDSVIPLTGSRTLVSRLAKQLGLRTSVPYRVWFAGQQVGGWTQVYGNVLSFATVRGASHEVPFSQPERSLVLFKAFLDGHPLPEEF.

The signal sequence occupies residues 1 to 24 (MSPLQWLTISFALIIFHSLTVSSS). Cystine bridges form between Cys-86-Cys-340, Cys-243-Cys-261, and Cys-286-Cys-309. An N-linked (GlcNAc...) asparagine glycan is attached at Asn-168. Ser-177 is an active-site residue. A glycan (N-linked (GlcNAc...) asparagine) is linked at Asn-244. Catalysis depends on residues Asp-377 and His-434.

It belongs to the peptidase S10 family. Ubiquitous.

It localises to the secreted. Its function is as follows. Probable carboxypeptidase. The polypeptide is Serine carboxypeptidase-like 45 (SCPL45) (Arabidopsis thaliana (Mouse-ear cress)).